Consider the following 276-residue polypeptide: Small ribosomal subunit protein uS2 (276 aa).

The residue at position 2 (Ser-2) is an N-acetylserine.

This sequence belongs to the universal ribosomal protein uS2 family. As to quaternary structure, component of the small ribosomal subunit. Mature ribosomes consist of a small (40S) and a large (60S) subunit. The 40S subunit contains about 33 different proteins and 1 molecule of RNA (18S). The 60S subunit contains about 49 different proteins and 3 molecules of RNA (28S, 5.8S and 5S). Interacts with rps-21.

The protein localises to the cytoplasm. Functionally, required for the assembly and/or stability of the 40S ribosomal subunit. Required for the processing of the 20S rRNA-precursor to mature 18S rRNA in a late step of the maturation of 40S ribosomal subunits. Involved in cold-warm shock-induced translocation of the RNA exosome components from the nucleolus to nucleoplasm. This Caenorhabditis elegans protein is Small ribosomal subunit protein uS2.